The chain runs to 285 residues: Ribosomal RNA small subunit methyltransferase H (285 aa).

Residues 34–36 (AGH), D51, F75, D96, and H103 contribute to the S-adenosyl-L-methionine site. A disordered region spans residues 258–285 (PLVPSEKEAAQNPRARSAKLRAAEKEAP).

It belongs to the methyltransferase superfamily. RsmH family.

It is found in the cytoplasm. It carries out the reaction cytidine(1402) in 16S rRNA + S-adenosyl-L-methionine = N(4)-methylcytidine(1402) in 16S rRNA + S-adenosyl-L-homocysteine + H(+). Specifically methylates the N4 position of cytidine in position 1402 (C1402) of 16S rRNA. The polypeptide is Ribosomal RNA small subunit methyltransferase H (Thermus thermophilus (strain ATCC BAA-163 / DSM 7039 / HB27)).